Reading from the N-terminus, the 474-residue chain is 3-isopropylmalate dehydratase large subunit (474 aa).

Cysteine 352, cysteine 413, and cysteine 416 together coordinate [4Fe-4S] cluster.

Belongs to the aconitase/IPM isomerase family. LeuC type 1 subfamily. Heterodimer of LeuC and LeuD. It depends on [4Fe-4S] cluster as a cofactor.

The enzyme catalyses (2R,3S)-3-isopropylmalate = (2S)-2-isopropylmalate. The protein operates within amino-acid biosynthesis; L-leucine biosynthesis; L-leucine from 3-methyl-2-oxobutanoate: step 2/4. Its function is as follows. Catalyzes the isomerization between 2-isopropylmalate and 3-isopropylmalate, via the formation of 2-isopropylmaleate. The chain is 3-isopropylmalate dehydratase large subunit from Pseudomonas savastanoi pv. phaseolicola (strain 1448A / Race 6) (Pseudomonas syringae pv. phaseolicola (strain 1448A / Race 6)).